The sequence spans 114 residues: Amphinase-3 (114 aa).

Catalysis depends on histidine 15, which acts as the Proton acceptor. A glycan (N-linked (GlcNAc...) asparagine) is linked at asparagine 25. 4 disulfides stabilise this stretch: cysteine 26–cysteine 79, cysteine 41–cysteine 85, cysteine 59–cysteine 100, and cysteine 97–cysteine 114. 42–46 (KPINT) is a binding site for substrate. 2 N-linked (GlcNAc...) asparagine glycosylation sites follow: asparagine 67 and asparagine 91. Histidine 107 functions as the Proton donor in the catalytic mechanism.

Belongs to the pancreatic ribonuclease family. As to quaternary structure, monomer. There are at least five different forms arising from glycan heterogeneity.

The protein localises to the secreted. Its function is as follows. Endonuclease, hydrolyzes highly polymerized RNA, poly(U) and poly(C), and the dinucleotides CpA and UpA. More active towards rCA than rUA or rUG. Has cytotoxic activity against cultured human submaxillary gland carcinoma cells. The polypeptide is Amphinase-3 (Lithobates pipiens (Northern leopard frog)).